Here is a 70-residue protein sequence, read N- to C-terminus: Chondroitin proteoglycan 9 (70 aa).

The signal sequence occupies residues 1-19 (MNFWHLLLLAVLFFVTVFG). 2 O-linked (Xyl...) (chondroitin sulfate) serine glycosylation sites follow: Ser-25 and Ser-27.

The chain is Chondroitin proteoglycan 9 (cpg-9) from Caenorhabditis briggsae.